Consider the following 149-residue polypeptide: UPF0178 protein Lmo1456 (149 aa).

The protein belongs to the UPF0178 family.

This is UPF0178 protein Lmo1456 from Listeria monocytogenes serovar 1/2a (strain ATCC BAA-679 / EGD-e).